The following is a 140-amino-acid chain: Ribosome-binding factor A (140 aa).

The protein belongs to the RbfA family. In terms of assembly, monomer. Binds 30S ribosomal subunits, but not 50S ribosomal subunits or 70S ribosomes.

It localises to the cytoplasm. Functionally, one of several proteins that assist in the late maturation steps of the functional core of the 30S ribosomal subunit. Associates with free 30S ribosomal subunits (but not with 30S subunits that are part of 70S ribosomes or polysomes). Required for efficient processing of 16S rRNA. May interact with the 5'-terminal helix region of 16S rRNA. The polypeptide is Ribosome-binding factor A (Cereibacter sphaeroides (strain ATCC 17025 / ATH 2.4.3) (Rhodobacter sphaeroides)).